The sequence spans 1052 residues: Lateral signaling target protein 2 homolog (1052 aa).

5 disordered regions span residues Y311–H348, P379–S455, D506–A539, L551–F678, and N814–G973. Composition is skewed to low complexity over residues S312–S346, P379–A392, and P400–A419. Over residues S422 to S455 the composition is skewed to acidic residues. Residues P554–T574 are compositionally biased toward polar residues. Phosphoserine occurs at positions 555 and 556. Composition is skewed to basic residues over residues R588 to Q614 and S625 to R644. The span at S652–I661 shows a compositional bias: polar residues. Residues N824 to S842 are compositionally biased toward low complexity. At S854 the chain carries Phosphoserine. A compositionally biased stretch (low complexity) spans Q872–S915. Polar residues predominate over residues S926–G935. Residues S936 to T963 are compositionally biased toward low complexity. The segment at D972 to V1032 adopts an FYVE-type zinc-finger fold. Positions 978, 981, 994, 997, 1002, 1005, 1024, and 1027 each coordinate Zn(2+).

Belongs to the lst-2 family.

Its function is as follows. Negative regulator of epidermal growth factor receptor (EGFR) signaling. This chain is Lateral signaling target protein 2 homolog, found in Drosophila virilis (Fruit fly).